The primary structure comprises 356 residues: NADH-quinone oxidoreductase subunit H (356 aa).

The next 9 membrane-spanning stretches (helical) occupy residues 16 to 36 (IAVLQILAFAVVLLISLAFLL), 52 to 72 (PNVVGAFGLLQSFADFFKFVF), 85 to 105 (LYLLAPLITLILAFVTWAVVP), 117 to 137 (VGILYLFAMSSLGVYGIIIGG), 163 to 183 (IGFIIVTVLLFAGSMNLSEII), 201 to 221 (WPMPMFLVMIPMAVIFFISAL), 254 to 274 (FMVGEYLNIVLMCAMTAILFF), 295 to 315 (AWYFFWFAAKIVFFFFMFAMV), and 334 to 354 (IFLPISLAAVALVGAAVVYGP).

The protein belongs to the complex I subunit 1 family. As to quaternary structure, NDH-1 is composed of 14 different subunits. Subunits NuoA, H, J, K, L, M, N constitute the membrane sector of the complex.

The protein localises to the cell inner membrane. The enzyme catalyses a quinone + NADH + 5 H(+)(in) = a quinol + NAD(+) + 4 H(+)(out). Its function is as follows. NDH-1 shuttles electrons from NADH, via FMN and iron-sulfur (Fe-S) centers, to quinones in the respiratory chain. The immediate electron acceptor for the enzyme in this species is believed to be ubiquinone. Couples the redox reaction to proton translocation (for every two electrons transferred, four hydrogen ions are translocated across the cytoplasmic membrane), and thus conserves the redox energy in a proton gradient. This subunit may bind ubiquinone. This Maricaulis maris (strain MCS10) (Caulobacter maris) protein is NADH-quinone oxidoreductase subunit H.